Reading from the N-terminus, the 136-residue chain is ATP synthase epsilon chain 2 (136 aa).

It belongs to the ATPase epsilon chain family. In terms of assembly, F-type ATPases have 2 components, CF(1) - the catalytic core - and CF(0) - the membrane proton channel. CF(1) has five subunits: alpha(3), beta(3), gamma(1), delta(1), epsilon(1). CF(0) has three main subunits: a, b and c.

It localises to the cell inner membrane. Functionally, produces ATP from ADP in the presence of a proton gradient across the membrane. This is ATP synthase epsilon chain 2 from Nitrobacter hamburgensis (strain DSM 10229 / NCIMB 13809 / X14).